Here is a 296-residue protein sequence, read N- to C-terminus: NAD kinase (296 aa).

Residue D72 is the Proton acceptor of the active site. Residues 72–73, 146–147, R157, K174, D176, 187–192, and Q247 each bind NAD(+); these read DG, ND, and TAYALS.

Belongs to the NAD kinase family. Requires a divalent metal cation as cofactor.

It localises to the cytoplasm. It carries out the reaction NAD(+) + ATP = ADP + NADP(+) + H(+). In terms of biological role, involved in the regulation of the intracellular balance of NAD and NADP, and is a key enzyme in the biosynthesis of NADP. Catalyzes specifically the phosphorylation on 2'-hydroxyl of the adenosine moiety of NAD to yield NADP. The chain is NAD kinase from Pseudomonas entomophila (strain L48).